A 239-amino-acid chain; its full sequence is Probable transcriptional regulatory protein MG332 (239 aa).

The protein belongs to the TACO1 family.

It localises to the cytoplasm. The polypeptide is Probable transcriptional regulatory protein MG332 (Mycoplasma genitalium (strain ATCC 33530 / DSM 19775 / NCTC 10195 / G37) (Mycoplasmoides genitalium)).